Reading from the N-terminus, the 97-residue chain is Aspartyl/glutamyl-tRNA(Asn/Gln) amidotransferase subunit C (97 aa).

It belongs to the GatC family. As to quaternary structure, heterotrimer of A, B and C subunits.

It catalyses the reaction L-glutamyl-tRNA(Gln) + L-glutamine + ATP + H2O = L-glutaminyl-tRNA(Gln) + L-glutamate + ADP + phosphate + H(+). It carries out the reaction L-aspartyl-tRNA(Asn) + L-glutamine + ATP + H2O = L-asparaginyl-tRNA(Asn) + L-glutamate + ADP + phosphate + 2 H(+). In terms of biological role, allows the formation of correctly charged Asn-tRNA(Asn) or Gln-tRNA(Gln) through the transamidation of misacylated Asp-tRNA(Asn) or Glu-tRNA(Gln) in organisms which lack either or both of asparaginyl-tRNA or glutaminyl-tRNA synthetases. The reaction takes place in the presence of glutamine and ATP through an activated phospho-Asp-tRNA(Asn) or phospho-Glu-tRNA(Gln). The protein is Aspartyl/glutamyl-tRNA(Asn/Gln) amidotransferase subunit C of Cyanothece sp. (strain PCC 7425 / ATCC 29141).